We begin with the raw amino-acid sequence, 200 residues long: dITP/XTP pyrophosphatase (200 aa).

7–12 lines the substrate pocket; sequence TSNKHK. Mg(2+)-binding residues include E38 and D73. D73 functions as the Proton acceptor in the catalytic mechanism. Residues S74, 154-157, K177, and 182-183 contribute to the substrate site; these read FGYD and HR.

The protein belongs to the HAM1 NTPase family. As to quaternary structure, homodimer. Mg(2+) serves as cofactor.

It catalyses the reaction XTP + H2O = XMP + diphosphate + H(+). It carries out the reaction dITP + H2O = dIMP + diphosphate + H(+). The enzyme catalyses ITP + H2O = IMP + diphosphate + H(+). Functionally, pyrophosphatase that catalyzes the hydrolysis of nucleoside triphosphates to their monophosphate derivatives, with a high preference for the non-canonical purine nucleotides XTP (xanthosine triphosphate), dITP (deoxyinosine triphosphate) and ITP. Seems to function as a house-cleaning enzyme that removes non-canonical purine nucleotides from the nucleotide pool, thus preventing their incorporation into DNA/RNA and avoiding chromosomal lesions. This Campylobacter jejuni subsp. doylei (strain ATCC BAA-1458 / RM4099 / 269.97) protein is dITP/XTP pyrophosphatase.